Here is a 435-residue protein sequence, read N- to C-terminus: Glutamyl-tRNA reductase (435 aa).

Residues 49-52 (TCNR), serine 109, 114-116 (ETQ), and glutamine 120 each bind substrate. Cysteine 50 serves as the catalytic Nucleophile. 189–194 (GAGEMS) provides a ligand contact to NADP(+).

This sequence belongs to the glutamyl-tRNA reductase family. In terms of assembly, homodimer.

It carries out the reaction (S)-4-amino-5-oxopentanoate + tRNA(Glu) + NADP(+) = L-glutamyl-tRNA(Glu) + NADPH + H(+). The protein operates within porphyrin-containing compound metabolism; protoporphyrin-IX biosynthesis; 5-aminolevulinate from L-glutamyl-tRNA(Glu): step 1/2. Its function is as follows. Catalyzes the NADPH-dependent reduction of glutamyl-tRNA(Glu) to glutamate 1-semialdehyde (GSA). In Listeria innocua serovar 6a (strain ATCC BAA-680 / CLIP 11262), this protein is Glutamyl-tRNA reductase.